Reading from the N-terminus, the 117-residue chain is Large ribosomal subunit protein uL18 (117 aa).

The protein belongs to the universal ribosomal protein uL18 family. Part of the 50S ribosomal subunit; part of the 5S rRNA/L5/L18/L25 subcomplex. Contacts the 5S and 23S rRNAs.

This is one of the proteins that bind and probably mediate the attachment of the 5S RNA into the large ribosomal subunit, where it forms part of the central protuberance. This chain is Large ribosomal subunit protein uL18, found in Vibrio vulnificus (strain CMCP6).